Consider the following 345-residue polypeptide: 3-isopropylmalate dehydrogenase (345 aa).

Residue 76–87 (GPKYDNAPVRPE) coordinates NAD(+). Residues Arg-94, Arg-104, Arg-132, and Asp-216 each coordinate substrate. Mg(2+) contacts are provided by Asp-216, Asp-240, and Asp-244. An NAD(+)-binding site is contributed by 274 to 286 (GSAPDIAGQGIAN).

Belongs to the isocitrate and isopropylmalate dehydrogenases family. LeuB type 1 subfamily. Homodimer. Mg(2+) is required as a cofactor. Requires Mn(2+) as cofactor.

The protein localises to the cytoplasm. It carries out the reaction (2R,3S)-3-isopropylmalate + NAD(+) = 4-methyl-2-oxopentanoate + CO2 + NADH. Its pathway is amino-acid biosynthesis; L-leucine biosynthesis; L-leucine from 3-methyl-2-oxobutanoate: step 3/4. In terms of biological role, catalyzes the oxidation of 3-carboxy-2-hydroxy-4-methylpentanoate (3-isopropylmalate) to 3-carboxy-4-methyl-2-oxopentanoate. The product decarboxylates to 4-methyl-2 oxopentanoate. The polypeptide is 3-isopropylmalate dehydrogenase (Streptococcus thermophilus (strain CNRZ 1066)).